A 213-amino-acid chain; its full sequence is Ion-translocating oxidoreductase complex subunit E (213 aa).

Helical transmembrane passes span 25 to 45 (TFGL…VENG), 46 to 66 (IGMA…VSAI), 77 to 97 (PVEI…MEAF), 100 to 120 (DLYT…IVIG), 135 to 155 (IIDA…IGGI), and 181 to 201 (AMFM…MTIV).

It belongs to the NqrDE/RnfAE family. As to quaternary structure, the Rnf complex is probably composed of eight subunits, including RnfA, RnfB, RnfC, RnfD, RnfE and RnfG.

The protein localises to the cell membrane. Its function is as follows. Part of a membrane-bound complex that couples electron transfer with translocation of ions across the membrane. Catalyzes Na(+) transport, most probably coupled to electron transfer from reduced ferredoxin to methanophenazine and heterodisulfide reductase. Involved in heterodisulfide reduction during methanogenesis from acetate. The sequence is that of Ion-translocating oxidoreductase complex subunit E from Methanosarcina acetivorans (strain ATCC 35395 / DSM 2834 / JCM 12185 / C2A).